Reading from the N-terminus, the 679-residue chain is E3 ubiquitin ligase RNF157 (679 aa).

The N-myristoyl glycine moiety is linked to residue G2. An RING-type zinc finger spans residues 277–316 (CVVCLSDVRDTLILPCRHLCLCNTCADTLRYQANNCPICR). A D-box 1 motif is present at residues 329-332 (RKKL). Composition is skewed to polar residues over residues 339–349 (SFNPIISSQTS) and 478–537 (ESEN…SMSG). 3 disordered regions span residues 339–362 (SFNP…NIPP), 416–604 (LDRL…TQEG), and 650–679 (VSRN…PLAV). Residues 585–598 (QDAEGNDVIEEEDG) are compositionally biased toward acidic residues. Residues 656–659 (RRRL) carry the D-box 2 motif. Phosphoserine is present on residues S660, S661, S662, and S663.

Interacts with APBB1. Interacts with CHD1; CHD1-binding controls RNF157 stability. Interacts with ATRN, MEGF8, TECR, MSI2, PLRG1, BYSL, MTERF3, PSMA1, MRPS18B, PRPF4, FASTKD2, SLC25A1, SMU1, CNOT9, MRPS2, MAGT1, FXR2, EMD, PSMD8, HDAC1, RAN, HSD17B12, TXNDC5 and MRPL19. In terms of processing, phosphorylation at Ser-660, Ser-661, Ser-662 and Ser-663 downstream of the PI3K and MAPK pathways influences the E3 ligase activity and stability of RNF157 during the cell cycle in an anaphase-promoting complex/cyclosome-CDH1-dependent manner.

The protein localises to the cytoplasm. The enzyme catalyses S-ubiquitinyl-[E2 ubiquitin-conjugating enzyme]-L-cysteine + [acceptor protein]-L-lysine = [E2 ubiquitin-conjugating enzyme]-L-cysteine + N(6)-ubiquitinyl-[acceptor protein]-L-lysine.. Functionally, E3 ubiquitin ligase that ubiquitinates APBB1 for its degradation by the proteasome and thus prevents apoptosis and promotes survival of neurons. Has a dual role in neurons as it is also required for dendrite growth and maintenance for which its ligase activity is not critical. May act as a scaffold molecule to regulate this process. Acts as a downstream effector of the interconnected PI3K and MAPK signaling pathways and thus participates in the regulation of the cell cycle. In Homo sapiens (Human), this protein is E3 ubiquitin ligase RNF157 (RNF157).